The following is a 1429-amino-acid chain: Nitric oxide synthase 1 (1429 aa).

The interval 1–200 is interaction with NOSIP; sequence MEEHTFGVQQ…LQDSGEQDEL (200 aa). The region spanning 17–99 is the PDZ domain; sequence SVRLFKRKVG…ETHVVLILRG (83 aa). Disordered regions lie at residues 114 to 174 and 271 to 298; these read DGTP…SVSQ and NNPY…SRCP. Positions 163-240 are interaction with DYNLL1/PIN; that stretch reads QGRGQGAGSV…TGIQVDRDLD (78 aa). Polar residues predominate over residues 272–294; the sequence is NPYSENEQSPASGKQSPTKNGSP. The residue at position 280 (Ser-280) is a Phosphoserine. Position 334 (Ser-334) interacts with (6R)-L-erythro-5,6,7,8-tetrahydrobiopterin. A heme b-binding site is contributed by Cys-415. L-arginine contacts are provided by Gln-478, Trp-587, Tyr-588, and Glu-592. Val-677, Trp-678, and Phe-691 together coordinate (6R)-L-erythro-5,6,7,8-tetrahydrobiopterin. Tyr-706 lines the heme b pocket. The tract at residues 725-745 is calmodulin-binding; sequence KRRAIGFKKLAEAVKFSAKLM. In terms of domain architecture, Flavodoxin-like spans 755-935; sequence ATILYATETG…AFRTWAKKVF (181 aa). The FMN site is built by Thr-761, Glu-762, Thr-763, Lys-765, Ser-766, Ser-807, Thr-808, and Gly-812. Residues Ser-847, Ser-857, and Ser-858 each carry the phosphoserine modification. FMN is bound by residues Ser-886, His-891, Cys-893, Glu-919, and Gln-923. The FAD-binding FR-type domain maps to 990–1237; that stretch reads KRVSAARLLS…VRGAPSFHLP (248 aa). Arg-1010 serves as a coordination point for NADP(+). His-1032, Arg-1173, Tyr-1174, Tyr-1175, Ser-1176, Thr-1191, and Ala-1193 together coordinate FAD. NADP(+) is bound at residue Ser-1196. Positions 1197, 1210, 1211, and 1212 each coordinate FAD. Residues Thr-1251, Arg-1284, Ser-1313, Arg-1314, Lys-1320, Tyr-1322, Gln-1324, Asp-1357, Thr-1398, and Arg-1400 each contribute to the NADP(+) site.

The protein belongs to the NOS family. As to quaternary structure, homodimer. Interacts with DLG4; the interaction possibly being prevented by the association between NOS1 and CAPON. Forms a ternary complex with CAPON and RASD1. Forms a ternary complex with CAPON and SYN1. Interacts with ZDHHC23. Interacts with NOSIP; which may impair its synaptic location. Interacts with HTR4. Interacts with VAC14. Interacts (via N-terminal domain) with DLG4 (via N-terminal tandem pair of PDZ domains). Interacts with SLC6A4. Forms a complex with ASL, ASS1 and SLC7A1; the complex regulates cell-autonomous L-arginine synthesis and citrulline recycling while channeling extracellular L-arginine to nitric oxide synthesis pathway. Interacts with DMD; localizes NOS1 to sarcolemma in muscle cells. Interacts with DYNLL1; inhibits the nitric oxide synthase activity. The cofactor is heme b. Requires FAD as cofactor. FMN is required as a cofactor. (6R)-L-erythro-5,6,7,8-tetrahydrobiopterin serves as cofactor. In terms of processing, ubiquitinated; mediated by STUB1/CHIP in the presence of Hsp70 and Hsp40 (in vitro). In terms of tissue distribution, widely expressed in the nervous system: expressed in cerebrum, olfactory bulb, hippocampus, midbrain, cerebellum, pons, medulla oblongata, and spinal cord. Also found in skeletal muscle, where it is localized beneath the sarcolemma of fast twitch muscle fibers, and in spleen, heart, kidney, and liver. N-NOS-1 and N-NOS-2 are found in all parts of the nervous system. NNOS beta and gamma occur in a region-specific manner in the brain and NNOS beta expression is developmentally regulated. NNOS Mu is only found in mature skeletal and cardiac muscles.

Its subcellular location is the cell membrane. It is found in the sarcolemma. The protein localises to the cell projection. The protein resides in the dendritic spine. It catalyses the reaction 2 L-arginine + 3 NADPH + 4 O2 + H(+) = 2 L-citrulline + 2 nitric oxide + 3 NADP(+) + 4 H2O. Its activity is regulated as follows. Stimulated by calcium/calmodulin. Inhibited by DYNLL1 that prevents the dimerization of the protein. Inhibited by NOSIP. Produces nitric oxide (NO) which is a messenger molecule with diverse functions throughout the body. In the brain and peripheral nervous system, NO displays many properties of a neurotransmitter. Probably has nitrosylase activity and mediates cysteine S-nitrosylation of cytoplasmic target proteins such SRR. Isoform NNOS Mu may be an effector enzyme for the dystrophin complex. This is Nitric oxide synthase 1 from Mus musculus (Mouse).